The chain runs to 185 residues: MTVAEVLADARDRMGKAVEAVKEDFGSVRTGRANPALFQKVMVEYYGSPTPLGQLASMNNPEARTLIVTPYDKTALKEIEKALVNVPNLSATVGNDGEMVRFTLPELTEDRRKEFVKIVRGKAEEGRVSVRNIRRRSKDELDALKGEVGDDEVARVEKELEALTKTHTDQVDDALKRKETELLEV.

The protein belongs to the RRF family.

Its subcellular location is the cytoplasm. Functionally, responsible for the release of ribosomes from messenger RNA at the termination of protein biosynthesis. May increase the efficiency of translation by recycling ribosomes from one round of translation to another. This chain is Ribosome-recycling factor, found in Clavibacter sepedonicus (Clavibacter michiganensis subsp. sepedonicus).